We begin with the raw amino-acid sequence, 469 residues long: Keratin, type I cytoskeletal 16 (469 aa).

Residues 1–20 (MATCSRQFTSSSSMKGSCGI) form a disordered region. The head stretch occupies residues 1-112 (MATCSRQFTS…GIGDGLLVGS (112 aa)). The tract at residues 113–148 (EKVTMQNLNDRLATYLDKVRALEEANRDLEVKIRDW) is coil 1A. The 312-residue stretch at 113–424 (EKVTMQNLND…RLLDGENIHS (312 aa)) folds into the IF rod domain. The interval 149 to 166 (YQRQRPTEIKDYSPYFKT) is linker 1. The interval 167-258 (IEDLKSKIII…KNHEEEMLAL (92 aa)) is coil 1B. The tract at residues 259 to 281 (RGQTGGDVNVEMDAAPGVDLSRI) is linker 12. The tract at residues 282–420 (LNEMRDQYEQ…ATYRRLLDGE (139 aa)) is coil 2. The tract at residues 421-469 (NIHSSSQHSSGQSYSSREVFSSSSRQPRSILKEQGSTSFSQSQSQSSRD) is tail. The tract at residues 422 to 469 (IHSSSQHSSGQSYSSREVFSSSSRQPRSILKEQGSTSFSQSQSQSSRD) is disordered. 2 stretches are compositionally biased toward low complexity: residues 423 to 444 (HSSSQHSSGQSYSSREVFSSSS) and 454 to 469 (QGSTSFSQSQSQSSRD).

Belongs to the intermediate filament family. As to quaternary structure, heterodimer of a type I and a type II keratin. KRT16 associates with KRT6 isomers (KRT6A or KRT6B). Interacts with TCHP. Interacts with TRADD. In terms of tissue distribution, expressed in the epithelia of the tongue, upper and lower palate, footpad, proximal nail fold and nail bed, penile spine, sweat gland ducts, and back epidermis (at protein level). Expressed in upper suprabasal layers of the corneal epithelium (at protein level). Expressed in internal stratified epithelia in the esophagus and vagina (at protein level). Expressed in transitional stratified squamous epithelia in the forestomach, anal canal, and nasal cavity (at protein level). Expressed in transitional epithelia of the ureter, bladder and urethra (at protein level). In mature hair follicles, expressed in the companion layer of the outer root sheath during anagen and in the club hair sheath during catagen and telogen (at protein level).

Functionally, epidermis-specific type I keratin that plays a key role in skin. Acts as a regulator of innate immunity in response to skin barrier breach: required for some inflammatory checkpoint for the skin barrier maintenance. The protein is Keratin, type I cytoskeletal 16 (Krt16) of Mus musculus (Mouse).